The sequence spans 190 residues: Zinc finger C2H2 protein ECU03_0790 (190 aa).

4 consecutive C2H2-type zinc fingers follow at residues 4–27 (RCCF…LNTH), 33–55 (YKCD…KKKH), 85–108 (YKCG…ESHH), and 119–142 (HVCE…RSVH).

This Encephalitozoon cuniculi (strain GB-M1) (Microsporidian parasite) protein is Zinc finger C2H2 protein ECU03_0790.